The sequence spans 369 residues: uncharacterized protein (369 aa).

The N-terminal stretch at 1–19 (MKKLIAVAVLSACGSLAHA) is a signal peptide.

This is an uncharacterized protein from Haemophilus influenzae (strain ATCC 51907 / DSM 11121 / KW20 / Rd).